The primary structure comprises 520 residues: ATP-dependent RNA helicase CshA (520 aa).

The short motif at 2–30 (TKFSEFGLDEKIVKSVNRMGFEEATPIQE) is the Q motif element. Positions 33-203 (IPLGLEGKDL…ERFMHSPELI (171 aa)) constitute a Helicase ATP-binding domain. 46–53 (AQTGTGKT) lines the ATP pocket. Residues 151-154 (DEAD) carry the DEAD box motif. One can recognise a Helicase C-terminal domain in the interval 214–374 (LIEQFFVKVH…PLQAPTWDEA (161 aa)). Basic and acidic residues predominate over residues 428-439 (KTPVHITEERPL). The segment at 428 to 520 (KTPVHITEER…NKGNYSQKSK (93 aa)) is disordered. 2 stretches are compositionally biased toward gly residues: residues 442–468 (RGGGGYKGKNGKGGKGGGYRGGSGKGG) and 482–496 (SGGGSGGGSGSGGGG).

This sequence belongs to the DEAD box helicase family. CshA subfamily. Oligomerizes, may be a member of the RNA degradosome.

It is found in the cytoplasm. It catalyses the reaction ATP + H2O = ADP + phosphate + H(+). Its function is as follows. DEAD-box RNA helicase possibly involved in RNA degradation. Unwinds dsRNA in both 5'- and 3'-directions, has RNA-dependent ATPase activity. Involved in cold tolerance, motility and alcohol tolerance. The polypeptide is ATP-dependent RNA helicase CshA (Listeria monocytogenes serovar 1/2a (strain ATCC BAA-679 / EGD-e)).